A 68-amino-acid chain; its full sequence is ATP synthase F(0) complex subunit 8 (68 aa).

A helical membrane pass occupies residues Thr8–Phe24. Lys54 carries the post-translational modification N6-acetyllysine; alternate. At Lys54 the chain carries N6-succinyllysine; alternate. At Lys57 the chain carries N6-acetyllysine.

Belongs to the ATPase protein 8 family. As to quaternary structure, component of the ATP synthase complex composed at least of ATP5F1A/subunit alpha, ATP5F1B/subunit beta, ATP5MC1/subunit c (homooctomer), MT-ATP6/subunit a, MT-ATP8/subunit 8, ATP5ME/subunit e, ATP5MF/subunit f, ATP5MG/subunit g, ATP5MK/subunit k, ATP5MJ/subunit j, ATP5F1C/subunit gamma, ATP5F1D/subunit delta, ATP5F1E/subunit epsilon, ATP5PF/subunit F6, ATP5PB/subunit b, ATP5PD/subunit d, ATP5PO/subunit OSCP. ATP synthase complex consists of a soluble F(1) head domain (subunits alpha(3) and beta(3)) - the catalytic core - and a membrane F(0) domain - the membrane proton channel (subunits c, a, 8, e, f, g, k and j). These two domains are linked by a central stalk (subunits gamma, delta, and epsilon) rotating inside the F1 region and a stationary peripheral stalk (subunits F6, b, d, and OSCP). Interacts with PRICKLE3.

Its subcellular location is the mitochondrion membrane. Functionally, subunit 8, of the mitochondrial membrane ATP synthase complex (F(1)F(0) ATP synthase or Complex V) that produces ATP from ADP in the presence of a proton gradient across the membrane which is generated by electron transport complexes of the respiratory chain. ATP synthase complex consist of a soluble F(1) head domain - the catalytic core - and a membrane F(1) domain - the membrane proton channel. These two domains are linked by a central stalk rotating inside the F(1) region and a stationary peripheral stalk. During catalysis, ATP synthesis in the catalytic domain of F(1) is coupled via a rotary mechanism of the central stalk subunits to proton translocation. In vivo, can only synthesize ATP although its ATP hydrolase activity can be activated artificially in vitro. Part of the complex F(0) domain. In Ceratotherium simum (White rhinoceros), this protein is ATP synthase F(0) complex subunit 8.